Consider the following 401-residue polypeptide: Canavanine gamma-lyase (401 aa).

Lysine 214 carries the N6-(pyridoxal phosphate)lysine modification.

The protein belongs to the trans-sulfuration enzymes family. Pyridoxal 5'-phosphate is required as a cofactor.

It carries out the reaction L-canavanine + H2O = N-hydroxyguanidine + L-homoserine. Its function is as follows. Lyase involved in the degradation of canavanine, the delta-oxa-analog of arginine, allowing growth on canavanine as sole nitrogen and carbon source. Catalyzes the elimination of hydroxyguanidine from canavanine with a subsequent water addition to yield homoserine. The polypeptide is Canavanine gamma-lyase (Rhizobium leguminosarum bv. trifolii (strain WSM2304)).